A 427-amino-acid chain; its full sequence is Adenylosuccinate synthetase (427 aa).

GTP-binding positions include Gly-12–Lys-18 and Gly-40–Thr-42. Asp-13 (proton acceptor) is an active-site residue. Residues Asp-13 and Gly-40 each contribute to the Mg(2+) site. IMP is bound by residues Asp-13 to Lys-16, Asn-38 to His-41, Thr-128, Arg-142, Gln-223, Thr-238, and Arg-302. His-41 serves as the catalytic Proton donor. Thr-298–Arg-304 is a binding site for substrate. GTP-binding positions include Arg-304, Ser-330–Asp-332, and Ser-412–Gly-414.

Belongs to the adenylosuccinate synthetase family. Homodimer. Requires Mg(2+) as cofactor.

Its subcellular location is the cytoplasm. The catalysed reaction is IMP + L-aspartate + GTP = N(6)-(1,2-dicarboxyethyl)-AMP + GDP + phosphate + 2 H(+). The protein operates within purine metabolism; AMP biosynthesis via de novo pathway; AMP from IMP: step 1/2. Its function is as follows. Plays an important role in the de novo pathway of purine nucleotide biosynthesis. Catalyzes the first committed step in the biosynthesis of AMP from IMP. The sequence is that of Adenylosuccinate synthetase from Staphylococcus saprophyticus subsp. saprophyticus (strain ATCC 15305 / DSM 20229 / NCIMB 8711 / NCTC 7292 / S-41).